The chain runs to 414 residues: Schlafen-like protein 1 (414 aa).

The interval 141–203 is disordered; that stretch reads LHHREQDDSG…ISQNRPSGVR (63 aa). The span at 154–185 shows a compositional bias: pro residues; the sequence is SHSPGPSPGPSPGPSPGFRRPPLPQLADPPPN. 268–275 is a binding site for ATP; sequence GVEDSGLV. The stretch at 373 to 407 forms a coiled coil; that stretch reads RQKWTAELSKLEEKVDVLTLEKEQLQEQLRQRQTL.

The protein belongs to the Schlafen family. Subgroup I subfamily.

This is Schlafen-like protein 1 (Slfnl1) from Rattus norvegicus (Rat).